A 337-amino-acid chain; its full sequence is Cytoskeleton protein RodZ (337 aa).

The Cytoplasmic portion of the chain corresponds to 1 to 111 (MNTEATHDQN…LGKRRKKRDG (111 aa)). One can recognise an HTH cro/C1-type domain in the interval 19–71 (LRNAREQLGLSQQAVAERLCLKVSTVRDIEEDKAPADLASTFLRGYIRSYARL). Residues 30–49 (QQAVAERLCLKVSTVRDIEE) constitute a DNA-binding region (H-T-H motif). Residues 112–132 (WLMTFTWLVLFVVIGLSGAWW) form a helical; Signal-anchor for type II membrane protein membrane-spanning segment. The Periplasmic portion of the chain corresponds to 133–337 (WQDHKAQQEE…TLNAEQSPAQ (205 aa)). The segment covering 145–167 (TMADQSSAELSSNSEQGQSVPLN) has biased composition (polar residues). A disordered region spans residues 145–218 (TMADQSSAEL…AVVSPSQANV (74 aa)). Positions 168–207 (TSTTTDPATTSTPPASVDTTATNTQTPAVTAPAPAVDPQQ) are enriched in low complexity. Over residues 208-218 (NAVVSPSQANV) the composition is skewed to polar residues.

This sequence belongs to the RodZ family.

It is found in the cell inner membrane. Functionally, cytoskeletal protein that is involved in cell-shape control through regulation of the length of the long axis. This chain is Cytoskeleton protein RodZ, found in Shigella dysenteriae serotype 1 (strain Sd197).